A 31-amino-acid chain; its full sequence is GFLSTVKNLATNVAGTVLDTIRCKVTGGCRP.

Cys-23 and Cys-29 are oxidised to a cystine.

As to expression, expressed by the skin glands.

The protein resides in the secreted. In terms of biological role, antimicrobial activity against Gram-negative bacterium E.coli. This is Palustrin-2a from Lithobates palustris (Pickerel frog).